The primary structure comprises 969 residues: MMDFLKRFFGSSQERILKRFQKLVEEVNACDEKFSSLSDDELRKKTPQLKQRYQDGESLDKLLPEAYGVVKNVCRRLAGTPVEVSGYHQQWDMVPYDVQILGAIAMHKGFITEMQTGEGKTLTAVMPLYLNALTGKPVHLVTVNDYLAQRDCEWVGSVLRWLGLTTGVLVSGSPPEKRKAIYQCDVVYGTASEFGFDYLRDNSIATRKEEQVGRGFYFAIIDEIDSVLIDEARTPLIISGPGEKHNPVYFELKDRVAELVYFQREMCNHIAIEARKVLDPFLGTDVLPKDKKVVEAISEACRALWLVSKGMPLNRVLRRVREHPDLRAMIDKWDVFYHAEQNKEQCLEKLSSLYIVVDEHNNDFELTDKGMLQWIEKIGGAAEDFVMMDMGHEYALIEEDATLSPADKLNRKIAVSEKDTQRKARAHGLRQLLRAHLLMEKDIDYIVRDDQIVIIDEHTGRPQSGRRFSEGLHQAIEAKEHVTIRKESQTFATVTLQNFFRLYEKLAGMTGTAITESREFKEIYSLYVLQVPTFKPCLRIDHNDAFYMTEREKYQAIVAEIISAHRSGKPILIGTESVEVSEKLSRILRQNRINHTVLNAKNHAQEAEIIAGAGKVGAVTVATNMAGRGTDIKLDEEAVAAGGLYVIGTSRHQSRRIDRQLRGRCARLGDPGAAKFFLSFEDRLMRLFASPKLNTLIRHFRPPEGEAMSDPMFDRLIETAQKRVEGRNYTIRKHTLEYDDVMNKQRQTIYAFRNDVLHAEDLFVVAKEQIEHVALALAFLILKDAHADHCSLPKIEEWLSYSFPVKLDDQEIRRLGDVDAVADYIGDLLIEAFDVKFSAMLAEFTEIIGSAANAQGICNDILRSVIISHIDEEWKVHLVDMDLLRSEVGLRSVGQKDPLIEFKNESFLLFEGLIRDIRIAIVKHLFALELSLTRSDRPDNAIPTVATAFHNHDNFRPMELTIVGEEEES.

ATP is bound by residues Gln-99, 117–121, and Asp-631; that span reads GEGKT.

Belongs to the SecA family. Monomer and homodimer. Part of the essential Sec protein translocation apparatus which comprises SecA, SecYEG and auxiliary proteins SecDF. Other proteins may also be involved.

The protein resides in the cell inner membrane. It localises to the cytoplasm. It carries out the reaction ATP + H2O + cellular proteinSide 1 = ADP + phosphate + cellular proteinSide 2.. Its function is as follows. Part of the Sec protein translocase complex. Interacts with the SecYEG preprotein conducting channel. Has a central role in coupling the hydrolysis of ATP to the transfer of proteins into and across the cell membrane, serving as an ATP-driven molecular motor driving the stepwise translocation of polypeptide chains across the membrane. The sequence is that of Protein translocase subunit SecA from Chlamydia trachomatis serovar D (strain ATCC VR-885 / DSM 19411 / UW-3/Cx).